The primary structure comprises 155 residues: MSRRGTAEEKTAKSDPIYRNRLVNMLVNRILKHGKKSLAYQIIYRAVKKIQQKTEANPLSVLRQAIRGVTPDIAVKARRVGGSTHQVPIEIGSTQGKALAIRWLLGASRKRPGRNMAFKLSSELVDAAKGSGDAIRKKEETHRMAEANRAFAHFR.

Belongs to the universal ribosomal protein uS7 family. In terms of assembly, part of the 30S ribosomal subunit.

The protein resides in the plastid. It is found in the chloroplast. One of the primary rRNA binding proteins, it binds directly to 16S rRNA where it nucleates assembly of the head domain of the 30S subunit. The protein is Small ribosomal subunit protein uS7c (rps7) of Schisandra chinensis (Chinese magnolia vine).